A 156-amino-acid polypeptide reads, in one-letter code: CD-NTase/cGAS isopeptidase (156 aa).

In terms of domain architecture, MPN spans Leu16–Ser156. Glu39 functions as the Proton donor/acceptor in the catalytic mechanism. The Zn(2+) site is built by His101, His103, and Asp114. Residues His101–Asp114 carry the JAMM motif motif.

Belongs to the peptidase M67B family. Cap3 isopeptidase subfamily. Zn(2+) serves as cofactor.

With respect to regulation, cleavage of conjugated proteins is inhibited by EDTA. Functionally, metalloprotease priming reversal component of a CBASS system. CBASS (cyclic oligonucleotide-based antiphage signaling system) provides immunity against bacteriophages. The CD-NTase protein (DncV) synthesizes cyclic nucleotides in response to infection; these serve as specific second messenger signals. The signals activate a diverse range of effectors, leading to bacterial cell death and thus abortive phage infection. A type II-A(GA) CBASS system. Its function is as follows. Reverses the primed state of DncV, the CD-NTase. Cleaves a DncV-GFP (green fluorescent protein) fusion protein precisely at the C-terminus of DncV. Overexpression decreases the efficacy of CBASS protection against phages T2, T4, T5 and T6, blocks formation of DncV-conjugates in vivo, and inhibits in vivo activation of DncV. Antagonism of phage defense upon overexpression is CBASS-system specific, Cap3 from this bacteria only antagonizes its cognate CBASS system and not that of C.freundii, E.coli or E.hormaechei. Protects E.coli against phage infection. When the CBASS operon (capV-dncV-cap2-cap3) is introduced in E.coli MG1655 there is about 100-fold protection against phages P1 and T2. When the operon is introduced in E.coli MG1655 there is a more than 10(3) decrease in the efficiency of T2 plaque formation. Protects 100-fold against phage T5, offers no protection against T7. When the operon is introduced in E.coli MG1655 it protects against phages T2, T4, T5 and T6. Another paper shows the operon confers protection against phages P1, T2, T5 and T6 but not T4 or lambda. In Vibrio cholerae serotype O1 (strain ATCC 39315 / El Tor Inaba N16961), this protein is CD-NTase/cGAS isopeptidase.